The primary structure comprises 373 residues: Probable tRNA sulfurtransferase (373 aa).

The THUMP domain maps to 54-158 (NKNIEELSKV…NDVAYFYYKI (105 aa)). ATP-binding positions include 176–177 (LF), 201–202 (NF), Lys256, Gly278, and Gln287.

Belongs to the ThiI family.

It is found in the cytoplasm. It carries out the reaction [ThiI sulfur-carrier protein]-S-sulfanyl-L-cysteine + a uridine in tRNA + 2 reduced [2Fe-2S]-[ferredoxin] + ATP + H(+) = [ThiI sulfur-carrier protein]-L-cysteine + a 4-thiouridine in tRNA + 2 oxidized [2Fe-2S]-[ferredoxin] + AMP + diphosphate. It catalyses the reaction [ThiS sulfur-carrier protein]-C-terminal Gly-Gly-AMP + S-sulfanyl-L-cysteinyl-[cysteine desulfurase] + AH2 = [ThiS sulfur-carrier protein]-C-terminal-Gly-aminoethanethioate + L-cysteinyl-[cysteine desulfurase] + A + AMP + 2 H(+). The protein operates within cofactor biosynthesis; thiamine diphosphate biosynthesis. Its function is as follows. Catalyzes the ATP-dependent transfer of a sulfur to tRNA to produce 4-thiouridine in position 8 of tRNAs, which functions as a near-UV photosensor. Also catalyzes the transfer of sulfur to the sulfur carrier protein ThiS, forming ThiS-thiocarboxylate. This is a step in the synthesis of thiazole, in the thiamine biosynthesis pathway. The sulfur is donated as persulfide by IscS. The sequence is that of Probable tRNA sulfurtransferase from Saccharolobus islandicus (strain L.S.2.15 / Lassen #1) (Sulfolobus islandicus).